A 506-amino-acid chain; its full sequence is Cysteine--tRNA ligase (506 aa).

Residue Cys-34 participates in Zn(2+) binding. The 'HIGH' region motif lies at 36–46; that stretch reads PTVYDFAHIGN. Zn(2+) contacts are provided by Cys-230, His-269, and Glu-273. A 'KMSKS' region motif is present at residues 302–306; it reads KMSKS. Lys-305 is an ATP binding site.

Belongs to the class-I aminoacyl-tRNA synthetase family. In terms of assembly, monomer. The cofactor is Zn(2+).

Its subcellular location is the cytoplasm. The enzyme catalyses tRNA(Cys) + L-cysteine + ATP = L-cysteinyl-tRNA(Cys) + AMP + diphosphate. The polypeptide is Cysteine--tRNA ligase (Brucella ovis (strain ATCC 25840 / 63/290 / NCTC 10512)).